We begin with the raw amino-acid sequence, 110 residues long: Small nuclear ribonucleoprotein Sm D2 (110 aa).

Residues 31–110 (MSLINDAMVT…VIVVLKTPVE (80 aa)) form the Sm domain.

It belongs to the snRNP core protein family. In terms of assembly, component of the Sm core complex, present in spliceosomal snRNP U1, U2, U4/U6 and U5. The core complex contains SMB1, SMD1, SMD2, SMD3, SME1, SMX3 and SMX2 (Sm proteins B, D1, D2, D3, E, F and G, respectively), and is probably a heptameric ring structure. Belongs to the CWC complex (or CEF1-associated complex), a spliceosome sub-complex reminiscent of a late-stage spliceosome composed of the U2, U5 and U6 snRNAs and at least BUD13, BUD31, BRR2, CDC40, CEF1, CLF1, CUS1, CWC2, CWC15, CWC21, CWC22, CWC23, CWC24, CWC25, CWC27, ECM2, HSH155, IST3, ISY1, LEA1, MSL1, NTC20, PRP8, PRP9, PRP11, PRP19, PRP21, PRP22, PRP45, PRP46, SLU7, SMB1, SMD1, SMD2, SMD3, SMX2, SMX3, SNT309, SNU114, SPP2, SYF1, SYF2, RSE1 and YJU2. Component of the U4/U6-U5 tri-snRNP complex composed of the U4, U6 and U5 snRNAs and at least PRP3, PRP4, PRP6, PRP8, PRP18, PRP31, PRP38, SNU13, SNU23, SNU66, SNU114, SPP381, SMB1, SMD1, SMD2, SMD3, SMX2, SMX3, LSM2, LSM3, LSM4, LSM5, LSM6, LSM7, LSM8, BRR2 and DIB1.

It is found in the nucleus. Its subcellular location is the cytoplasm. The protein localises to the cytosol. In terms of biological role, plays a role in pre-mRNA splicing as a core component of the spliceosomal U1, U2, U4 and U5 small nuclear ribonucleoproteins (snRNPs), the building blocks of the spliceosome. In Saccharomyces cerevisiae (strain ATCC 204508 / S288c) (Baker's yeast), this protein is Small nuclear ribonucleoprotein Sm D2 (SMD2).